Reading from the N-terminus, the 129-residue chain is Glycine cleavage system H protein (129 aa).

The Lipoyl-binding domain occupies 24–106; sequence TYTVGITEHA…YTGGWIFKIK (83 aa). Lysine 65 is subject to N6-lipoyllysine.

The protein belongs to the GcvH family. The glycine cleavage system is composed of four proteins: P, T, L and H. The cofactor is (R)-lipoate.

Functionally, the glycine cleavage system catalyzes the degradation of glycine. The H protein shuttles the methylamine group of glycine from the P protein to the T protein. This Salmonella choleraesuis (strain SC-B67) protein is Glycine cleavage system H protein.